Consider the following 874-residue polypeptide: Alanine--tRNA ligase (874 aa).

The Zn(2+) site is built by His-564, His-568, Cys-665, and His-669.

Belongs to the class-II aminoacyl-tRNA synthetase family. Requires Zn(2+) as cofactor.

It localises to the cytoplasm. It carries out the reaction tRNA(Ala) + L-alanine + ATP = L-alanyl-tRNA(Ala) + AMP + diphosphate. Its function is as follows. Catalyzes the attachment of alanine to tRNA(Ala) in a two-step reaction: alanine is first activated by ATP to form Ala-AMP and then transferred to the acceptor end of tRNA(Ala). Also edits incorrectly charged Ser-tRNA(Ala) and Gly-tRNA(Ala) via its editing domain. This chain is Alanine--tRNA ligase, found in Cupriavidus metallidurans (strain ATCC 43123 / DSM 2839 / NBRC 102507 / CH34) (Ralstonia metallidurans).